Consider the following 461-residue polypeptide: Photosystem II CP43 reaction center protein (461 aa).

The propeptide occupies 1 to 2 (ME). Thr-3 is modified (N-acetylthreonine). Thr-3 is subject to Phosphothreonine. 5 consecutive transmembrane segments (helical) span residues 57-81 (LFEV…PHLA), 122-143 (LLGP…KDRN), 166-188 (KALY…RKIT), 243-263 (KPFA…LSYS), and 279-300 (WFNN…ASQA). Position 355 (Glu-355) interacts with [CaMn4O5] cluster. A helical transmembrane segment spans residues 435-459 (RARAAAAGFEKGIDRDFEPVLSMTP).

This sequence belongs to the PsbB/PsbC family. PsbC subfamily. As to quaternary structure, PSII is composed of 1 copy each of membrane proteins PsbA, PsbB, PsbC, PsbD, PsbE, PsbF, PsbH, PsbI, PsbJ, PsbK, PsbL, PsbM, PsbT, PsbX, PsbY, PsbZ, Psb30/Ycf12, at least 3 peripheral proteins of the oxygen-evolving complex and a large number of cofactors. It forms dimeric complexes. It depends on Binds multiple chlorophylls and provides some of the ligands for the Ca-4Mn-5O cluster of the oxygen-evolving complex. It may also provide a ligand for a Cl- that is required for oxygen evolution. PSII binds additional chlorophylls, carotenoids and specific lipids. as a cofactor.

The protein resides in the plastid. It is found in the chloroplast thylakoid membrane. One of the components of the core complex of photosystem II (PSII). It binds chlorophyll and helps catalyze the primary light-induced photochemical processes of PSII. PSII is a light-driven water:plastoquinone oxidoreductase, using light energy to abstract electrons from H(2)O, generating O(2) and a proton gradient subsequently used for ATP formation. The protein is Photosystem II CP43 reaction center protein of Gossypium barbadense (Sea Island cotton).